Reading from the N-terminus, the 365-residue chain is Neuronal migration protein doublecortin (365 aa).

The residue at position 28 (Ser28) is a Phosphoserine; by CDK5. Position 47 is a phosphoserine; by MARK1 and PKA (Ser47). Doublecortin domains lie at 53 to 139 (KKVR…VEYT) and 180 to 263 (KLVT…AQDD). Tyr70 bears the Phosphotyrosine; by ABL mark. Ser74 carries the post-translational modification Phosphoserine; by PKC. Ser90 bears the Phosphoserine; by CK2 mark. The residue at position 110 (Ser110) is a Phosphoserine; by PKC. Ser115 carries the phosphoserine; by CK2, MARK1 and PKA modification. The residue at position 265 (Ser265) is a Phosphoserine; by CK2. The segment at 275–365 (KGNPSATAGP…DDSDSLGDSM (91 aa)) is disordered. A Phosphoserine; by CDK5 modification is found at Ser287. Thr289 carries the phosphothreonine; by CDK5 modification. Position 294 is a phosphoserine; by PKC (Ser294). Ser297 bears the Phosphoserine; by CDK5 mark. The residue at position 306 (Ser306) is a Phosphoserine; by CK2. Ser306 bears the Phosphoserine; by DYRK2 mark. A compositionally biased stretch (polar residues) spans 307–341 (PADSGNDQDANGTSSSQLSTPKSKQSPISTPTSPG). Position 326 is a phosphothreonine; by CDK5 (Thr326). Thr326 is subject to Phosphothreonine; by PKC and MAPK. Residue Ser332 is modified to Phosphoserine; by CDK5. Ser332 carries the post-translational modification Phosphoserine; by MAPK. Thr336 is subject to Phosphothreonine; by MAPK. Ser339 carries the phosphoserine; by CDK5 modification. Ser339 carries the phosphoserine; by MAPK modification. Ser342 carries the phosphoserine; by PKC modification. Phosphoserine; by CK2 is present on residues Ser354 and Ser360. A compositionally biased stretch (acidic residues) spans 356 to 365 (DDSDSLGDSM).

Interacts with tubulin. Interacts with USP9X. Phosphorylation by MARK1, MARK2 and PKA regulates its ability to bind microtubules. Phosphorylation at Ser-265 and Ser-297 seems to occur only in neonatal brain, the levels falling precipitously by postnatal day 21. In terms of processing, ubiquitinated by MDM2, leading to its degradation by the proteasome. Ubiquitinated by MDM2 and subsequent degradation leads to reduce the dendritic spine density of olfactory bulb granule cells.

It localises to the cytoplasm. The protein localises to the cell projection. Its subcellular location is the neuron projection. Its function is as follows. Microtubule-associated protein required for initial steps of neuronal dispersion and cortex lamination during cerebral cortex development. May act by competing with the putative neuronal protein kinase DCLK1 in binding to a target protein. May in that way participate in a signaling pathway that is crucial for neuronal interaction before and during migration, possibly as part of a calcium ion-dependent signal transduction pathway. May participate along with PAFAH1B1/LIS-1 in a distinct overlapping signaling pathway that promotes neuronal migration. In Rattus norvegicus (Rat), this protein is Neuronal migration protein doublecortin (Dcx).